A 263-amino-acid chain; its full sequence is Proteasome subunit alpha type-1 (263 aa).

Residue methionine 1 is modified to N-acetylmethionine. Phosphoserine; alternate is present on serine 110. A glycan (O-linked (GlcNAc) serine; alternate) is linked at serine 110. Lysine 115 is covalently cross-linked (Glycyl lysine isopeptide (Lys-Gly) (interchain with G-Cter in ubiquitin)). The residue at position 177 (serine 177) is a Phosphoserine. Lysine 208 participates in a covalent cross-link: Glycyl lysine isopeptide (Lys-Gly) (interchain with G-Cter in ubiquitin). The disordered stretch occupies residues 232 to 263 (FLEGLEERPQRKAQPAQPADEPAEKADEPMEH). The span at 253-263 (PAEKADEPMEH) shows a compositional bias: basic and acidic residues.

The protein belongs to the peptidase T1A family. In terms of assembly, the 26S proteasome consists of a 20S proteasome core and two 19S regulatory subunits. The 20S proteasome core is a barrel-shaped complex made of 28 subunits that are arranged in four stacked rings. The two outer rings are each formed by seven alpha subunits, and the two inner rings are formed by seven beta subunits. The proteolytic activity is exerted by three beta-subunits PSMB5, PSMB6 and PSMB7. Interacts with NOTCH3. Interacts with ZFAND1.

It localises to the cytoplasm. The protein localises to the nucleus. In terms of biological role, component of the 20S core proteasome complex involved in the proteolytic degradation of most intracellular proteins. This complex plays numerous essential roles within the cell by associating with different regulatory particles. Associated with two 19S regulatory particles, forms the 26S proteasome and thus participates in the ATP-dependent degradation of ubiquitinated proteins. The 26S proteasome plays a key role in the maintenance of protein homeostasis by removing misfolded or damaged proteins that could impair cellular functions, and by removing proteins whose functions are no longer required. Associated with the PA200 or PA28, the 20S proteasome mediates ubiquitin-independent protein degradation. This type of proteolysis is required in several pathways including spermatogenesis (20S-PA200 complex) or generation of a subset of MHC class I-presented antigenic peptides (20S-PA28 complex). The protein is Proteasome subunit alpha type-1 of Homo sapiens (Human).